The chain runs to 843 residues: MPLSYQHFRKLLLLDDEAGPLEEELPRLADEGLNRRVAEDLNLGNPNVSIPWTHKVGNFTGLYSSTVPVFNPDWQTPKFPDIHLKEDIINRCQNYVGPLTVNEKRRLKLIMPARFYPTLTKYLPLEKGIKPYYPEHAVNHYFKTRHYLHTLWKAGILYKRETTRSASFCGSPYSWEQELQHGRLVFQTSERHGDESFCSQSSGILSRSPVGPCVRSQLKQSRLGLQPQQGSLARGKSGRSGSIRARVHPTTRRFFGVEPAGPGHIDNSASSSSSCIHQSAVRKTTHSHLTTAQRHSPSGHAVEFHSIPPSSAGSQSKGSVFSCWWLQFRNSKPCSEYCLSHLINLHEDWGPCIEHGEHNIRIPRTPARVTGGVFLVDKNPHNTSESRLVVDFSQFSRGSSRVYWPKFAVPNLQSLTNLLSSNLSWLSLDVSAAFYHLPLHPAAMPHLLVGSSGLSRYVARLSSTSRINDHQHGTLQNLHDHCSRNLYVSLMLLYKTFGRKLHLYSHPIILGFRKIPMGVGLSPFLLAQFTSAICSVVRRAFPHCLAFSYMDDLVLGAKSVQHLESLFTAVTNFLMSLGIHLNPHKTKRWGYSLNFMGYVIGSWGSLPQEHIVHKLKHCFRKLPVNRPIDWKVCQRIVGLLGFAAPFTQCGYPALMPLYACIQAKQAFTFSPTYKAFLCKQYLNLYPVARQRAGLCQVFADATPTGWGLAIGHQRVRGTFVAPLPIHTAELLAACFARSRSGANILGTDNSVVLSRKYTSFPWLLGCAANWILRGTSFVYVPSALNPADDPSRGRLGIYRPLLRLPFRPSTGRTSLYADSPSVPSHLPDRVHFASPLHVAWRPP.

The segment at 1–177 (MPLSYQHFRK…FCGSPYSWEQ (177 aa)) is terminal protein domain (TP). The segment at 178 to 346 (ELQHGRLVFQ…YCLSHLINLH (169 aa)) is spacer. 2 disordered regions span residues 218-243 (LKQS…SGSI) and 291-315 (TAQR…AGSQ). A polymerase/reverse transcriptase domain (RT) region spans residues 347-690 (EDWGPCIEHG…YLNLYPVARQ (344 aa)). The region spanning 357-600 (EHNIRIPRTP…YSLNFMGYVI (244 aa)) is the Reverse transcriptase domain. 3 residues coordinate Mg(2+): D429, D551, and D552.

The protein belongs to the hepadnaviridae P protein family.

It carries out the reaction DNA(n) + a 2'-deoxyribonucleoside 5'-triphosphate = DNA(n+1) + diphosphate. It catalyses the reaction Endonucleolytic cleavage to 5'-phosphomonoester.. With respect to regulation, activated by host HSP70 and HSP40 in vitro to be able to bind the epsilon loop of the pgRNA. Because deletion of the RNase H region renders the protein partly chaperone-independent, the chaperones may be needed indirectly to relieve occlusion of the RNA-binding site by this domain. Inhibited by several reverse-transcriptase inhibitors: Lamivudine, Adefovir and Entecavir. Multifunctional enzyme that converts the viral RNA genome into dsDNA in viral cytoplasmic capsids. This enzyme displays a DNA polymerase activity that can copy either DNA or RNA templates, and a ribonuclease H (RNase H) activity that cleaves the RNA strand of RNA-DNA heteroduplexes in a partially processive 3'- to 5'-endonucleasic mode. Neo-synthesized pregenomic RNA (pgRNA) are encapsidated together with the P protein, and reverse-transcribed inside the nucleocapsid. Initiation of reverse-transcription occurs first by binding the epsilon loop on the pgRNA genome, and is initiated by protein priming, thereby the 5'-end of (-)DNA is covalently linked to P protein. Partial (+)DNA is synthesized from the (-)DNA template and generates the relaxed circular DNA (RC-DNA) genome. After budding and infection, the RC-DNA migrates in the nucleus, and is converted into a plasmid-like covalently closed circular DNA (cccDNA). The activity of P protein does not seem to be necessary for cccDNA generation, and is presumably released from (+)DNA by host nuclear DNA repair machinery. The chain is Protein P from Hepatitis B virus genotype C subtype ayw (isolate Australia/AustRC/1992) (HBV-C).